The sequence spans 305 residues: MLDTSIQALINKWQKYLVLQRNYSNHTVISYNNDLKHFLEFMNYYNSEFVTINHIKTADIRLIRSWLAKRHCDNFTTSSISRGLSAVKNFYRFLEKTTQLNSHIIFSIKSPKKTKLLPKALSEDDVVISLEHIEEYGNVKWVELRNKALLVLIYASGLRISEALSITKLHLQNLEFIRIIGKGSKERIIPWLPIAKNLITQYLEILPYKLGDNEPIFRGKQGKKLQPPVFNRELIKLKHFYGLPQHLTAHSFRHSFASHLLEHGADLRSIQELLGHKSLSTTQNYTKTSIKHLEAVYTTAYPIKK.

The Core-binding (CB) domain maps to 4 to 95; the sequence is TSIQALINKW…AVKNFYRFLE (92 aa). In terms of domain architecture, Tyr recombinase spans 116 to 298; the sequence is LLPKALSEDD…SIKHLEAVYT (183 aa). Catalysis depends on residues Arg159, Lys182, His250, Arg253, and His276. Tyr285 functions as the O-(3'-phospho-DNA)-tyrosine intermediate in the catalytic mechanism.

Belongs to the 'phage' integrase family. XerC subfamily. Forms a cyclic heterotetrameric complex composed of two molecules of XerC and two molecules of XerD.

The protein localises to the cytoplasm. In terms of biological role, site-specific tyrosine recombinase, which acts by catalyzing the cutting and rejoining of the recombining DNA molecules. The XerC-XerD complex is essential to convert dimers of the bacterial chromosome into monomers to permit their segregation at cell division. It also contributes to the segregational stability of plasmids. The sequence is that of Tyrosine recombinase XerC from Rickettsia massiliae (strain Mtu5).